The sequence spans 119 residues: Large ribosomal subunit protein uL24 (119 aa).

It belongs to the universal ribosomal protein uL24 family. Part of the 50S ribosomal subunit.

In terms of biological role, one of two assembly initiator proteins, it binds directly to the 5'-end of the 23S rRNA, where it nucleates assembly of the 50S subunit. Its function is as follows. One of the proteins that surrounds the polypeptide exit tunnel on the outside of the subunit. This is Large ribosomal subunit protein uL24 from Paenarthrobacter aurescens (strain TC1).